A 229-amino-acid chain; its full sequence is Matrix protein (229 aa).

Over residues 1–12 (MSSFKKILGLSS) the composition is skewed to low complexity. Residues 1–35 (MSSFKKILGLSSKSHKKSKKMGLPPPYDESCPMET) form a disordered region. The dynamin binding signature appears at 2–4 (SSF). A PPXY motif motif is present at residues 24 to 27 (PPPY). Positions 37–40 (PSAP) match the PTAP/PSAP motif motif.

The protein belongs to the vesiculoviruses matrix protein family. In terms of assembly, homomultimer. Interacts with viral nucleocapsid; this interaction contributes to the virion assembly. Interacts with the viral envelope glycoprotein; this interaction contributes to the virion assembly. Interacts with host RAE1-NUP98 complex. Interacts with host NEDD4 and TSG101. Interacts with host dynamin. Interacts with host NDUFAF4; the interaction inhibits viral propagation and is independent of interferon activation. Interacts with host GTF2H5; the interaction may inhibit host transcription. In terms of processing, phosphorylated by host.

It localises to the virion. The protein localises to the host endomembrane system. Its subcellular location is the host nucleus membrane. The protein resides in the host nucleus. It is found in the host cytoplasm. Its function is as follows. Forms a double layer around the helical nucleocapsid, the inner matrix layer binding to the N helix and the outer matrix layer binding to the envelope glycoprotein. Plays a major role in assembly and budding of virion, by recruiting cellular partners of the ESCRT complexes that play a key role in releasing the budding particle from the host membrane. Condensates the ribonucleocapsid core during virus assembly. Inhibits the host mRNA nuclear export thereby inducing the shut off of cellular transcription and preventing the interferon signaling and the establishment of antiviral state in infected cells. This shutoff presumably inhibits interferon signaling and thus establishment of antiviral state in virus infected cells. Induces cell-rounding, cytoskeleton disorganization and apoptosis in infected cell. Inhibits host transcription, possibly through interaction with host DNA repair factor IIH/TFIIH GTF2H5 subunit. This Aedes (Bovine) protein is Matrix protein (M).